The sequence spans 273 residues: Alcohol dehydrogenase-related 31 kDa protein (273 aa).

Position 11-34 (11-34 (YVADCGGIALETCKVLMTKNIAKL)) interacts with NAD(+). Residue Ser139 coordinates substrate. The Proton acceptor role is filled by Tyr152.

The protein belongs to the short-chain dehydrogenases/reductases (SDR) family.

This is Alcohol dehydrogenase-related 31 kDa protein (Adhr) from Drosophila immigrans (Fruit fly).